Consider the following 452-residue polypeptide: Adenylosuccinate synthetase 2 (452 aa).

Residues 19–25 and 47–49 contribute to the GTP site; these read GDEGKAR and GHT. The active-site Proton acceptor is D20. Mg(2+)-binding residues include D20 and G47. IMP-binding positions include 20–23, 45–48, T131, R145, Q223, T238, and R338; these read DEGK and NAGH. Catalysis depends on H48, which acts as the Proton donor. 334–340 contacts substrate; the sequence is TGTGRPR. GTP is bound by residues R340, 366-368, and 437-439; these read KCD and GLG.

This sequence belongs to the adenylosuccinate synthetase family. In terms of assembly, homodimer. Mg(2+) serves as cofactor.

The protein resides in the cytoplasm. The enzyme catalyses IMP + L-aspartate + GTP = N(6)-(1,2-dicarboxyethyl)-AMP + GDP + phosphate + 2 H(+). Its pathway is purine metabolism; AMP biosynthesis via de novo pathway; AMP from IMP: step 1/2. Its function is as follows. Plays an important role in the de novo pathway of purine nucleotide biosynthesis. Catalyzes the first committed step in the biosynthesis of AMP from IMP. This Cupriavidus pinatubonensis (strain JMP 134 / LMG 1197) (Cupriavidus necator (strain JMP 134)) protein is Adenylosuccinate synthetase 2.